The following is a 251-amino-acid chain: uncharacterized protein (251 aa).

36–43 serves as a coordination point for ATP; the sequence is GKQGTGKT. The interval 230 to 251 is disordered; sequence SDNKTENPSNPSLLTKIDDVTR.

Functionally, this protein may be involved in virus assembly. Essential for virus function. This is an uncharacterized protein from Sulfolobus spindle-shape virus 1 (SSV1).